A 260-amino-acid polypeptide reads, in one-letter code: MSSSQSGVCPCQGSASHPTILYTLLSPGPRTRPMAPASRSHCLCQQHRPVRLCAPHRTCREALDVLGKTVAFLRNLPSFCLLPHEDQRRLLEGCWGPLFLLGLAQDTVTFEVAEAPVPSILKKILLEEPNSGAQGAQPPDPPQPSLAAVQWLQHCLESFWSLELGPKEYAYLKGTILFNPDVPGLHASCHIAHLQQEAHWALCEVLEPWYPASQGRLARILLMASTLKNISCTLLVDLFFRPVIGDVDITELLEDMLLLR.

The NR LBD domain maps to 16 to 260 (SHPTILYTLL…ELLEDMLLLR (245 aa)). Arg-57 is subject to Symmetric dimethylarginine; by PRMT5.

The protein belongs to the nuclear hormone receptor family. NR0 subfamily. In terms of assembly, heterodimer; efficient DNA binding requires dimerization with another bHLH protein. Interacts (via N-terminus) with NEUROD1 (via N-terminus and C-terminus). Interacts with ID2. Interacts with NR1I3 and EID1. Interacts with RARA, RXRA, THRB, NR5A1, NR5A2, PPARA and PPARG. Interacts with RORG, NFIL3, NR1D1 and BHLHE41. Interacts with HNF4A; the resulting heterodimer is transcriptionally inactive. Interacts with DDX3X; this interaction disrupts the interaction between HNF4 and NR0B2/SHP that forms inactive heterodimers and enhances the formation of active HNF4 homodimers. In terms of processing, arginine methylation by PRMT5 enhances repression activity of metabolic genes in liver in response to bile acid signaling, by increasing interaction with cofactors. Detected in kidney, testis, heart and liver.

It is found in the cytoplasm. The protein resides in the nucleus. Functionally, transcriptional regulator that acts as a negative regulator of receptor-dependent signaling pathways. Specifically inhibits transactivation of the nuclear receptor with which it interacts. Inhibits transcriptional activity of NEUROD1 on E-box-containing promoter by interfering with the coactivation function of the p300/CBP-mediated transcription complex for NEUROD1. Essential component of the liver circadian clock which via its interaction with NR1D1 and RORG regulates NPAS2-mediated hepatic lipid metabolism. Regulates the circadian expression of cytochrome P450 (CYP) enzymes. Represses: NR5A2 and HNF4A to down-regulate CYP2C38, NFLI3 to up-regulate CYP2A5, BHLHE41/HNF1A axis to up-regulate CYP1A2, CYP2E1 and CYP3A11, and NR1D1 to up-regulate CYP2B10, CYP4A10 and CYP4A14. This Rattus norvegicus (Rat) protein is Nuclear receptor subfamily 0 group B member 2 (Nr0b2).